Consider the following 208-residue polypeptide: Small ribosomal subunit protein uS4 (208 aa).

The tract at residues 31–51 is disordered; that stretch reads SALDKRAYGPGQHGQRRAKTS. The S4 RNA-binding domain occupies 98–160; that stretch reads RRLDNVVYRM…TKSNSQVVRA (63 aa).

It belongs to the universal ribosomal protein uS4 family. In terms of assembly, part of the 30S ribosomal subunit. Contacts protein S5. The interaction surface between S4 and S5 is involved in control of translational fidelity.

Functionally, one of the primary rRNA binding proteins, it binds directly to 16S rRNA where it nucleates assembly of the body of the 30S subunit. Its function is as follows. With S5 and S12 plays an important role in translational accuracy. The polypeptide is Small ribosomal subunit protein uS4 (Helicobacter pylori (strain ATCC 700392 / 26695) (Campylobacter pylori)).